The following is a 417-amino-acid chain: Serine hydroxymethyltransferase (417 aa).

Residues Leu112 and Gly116–Leu118 contribute to the (6S)-5,6,7,8-tetrahydrofolate site. N6-(pyridoxal phosphate)lysine is present on Lys221. Glu247 lines the (6S)-5,6,7,8-tetrahydrofolate pocket.

Belongs to the SHMT family. As to quaternary structure, homodimer. Pyridoxal 5'-phosphate serves as cofactor.

It localises to the cytoplasm. The catalysed reaction is (6R)-5,10-methylene-5,6,7,8-tetrahydrofolate + glycine + H2O = (6S)-5,6,7,8-tetrahydrofolate + L-serine. It participates in one-carbon metabolism; tetrahydrofolate interconversion. The protein operates within amino-acid biosynthesis; glycine biosynthesis; glycine from L-serine: step 1/1. In terms of biological role, catalyzes the reversible interconversion of serine and glycine with tetrahydrofolate (THF) serving as the one-carbon carrier. This reaction serves as the major source of one-carbon groups required for the biosynthesis of purines, thymidylate, methionine, and other important biomolecules. Also exhibits THF-independent aldolase activity toward beta-hydroxyamino acids, producing glycine and aldehydes, via a retro-aldol mechanism. This is Serine hydroxymethyltransferase from Borrelia hermsii (strain HS1 / DAH).